Consider the following 327-residue polypeptide: MKFGLFFLNFINSTTVQEQSIVRMQEITEYVDKLNFEQILVYENHFSDNGVVGAPLTVSGFLLGLTEKIKIGSLNHIITTHHPVAIAEEACLLDQLSEGRFILGFSDCEKKDEMHFFNRPVEYQQQLFEECYEIINDALTTGYCNPDNDFYSFPKISVNPHAYTPGGPRKYVTATSHHIVEWAAKKGIPLIFKWDDSNDVRYEYAERYKAVADKYDVDLSEIDHQLMILVNYNEDSNKAKQETRAFISDYVLEMHPNENFENKLEEIIAENAVGNYTECITAAKLAIEKCGAKSVLLSFEPMNDLMSQKNVINIVDDNIKKYHMEYT.

It belongs to the bacterial luciferase oxidoreductase family. As to quaternary structure, heterodimer of an alpha and a beta chain.

It carries out the reaction a long-chain fatty aldehyde + FMNH2 + O2 = a long-chain fatty acid + hnu + FMN + H2O + 2 H(+). Light-emitting reaction in luminous bacteria. The specific role of the beta subunit is unknown, but it is absolutely required for bioluminescence activity. This chain is Alkanal monooxygenase beta chain (luxB), found in Photorhabdus luminescens (Xenorhabdus luminescens).